We begin with the raw amino-acid sequence, 185 residues long: uncharacterized protein (185 aa).

Helical transmembrane passes span 1–21 and 111–131; these read MMKF…LTPE and FLWI…AFAW.

The protein to A.aeolicus aq_1900.

It localises to the cell membrane. This is an uncharacterized protein from Aquifex aeolicus (strain VF5).